The primary structure comprises 90 residues: Acylphosphatase (90 aa).

Residues 4-90 (RMYVKVYGIV…KGEFNNFDTY (87 aa)) enclose the Acylphosphatase-like domain. Active-site residues include Arg19 and Asn37.

Belongs to the acylphosphatase family.

The enzyme catalyses an acyl phosphate + H2O = a carboxylate + phosphate + H(+). This Sulfurisphaera tokodaii (strain DSM 16993 / JCM 10545 / NBRC 100140 / 7) (Sulfolobus tokodaii) protein is Acylphosphatase (acyP).